We begin with the raw amino-acid sequence, 398 residues long: MVFLGKILPLALAALSVNGAEILSAPGAENIPNGYIVVMKEGTSTQDFDAHREWVASVHHERLARRGSTNVGGMRHTYNFNQGFMGYAGTFDEETIQEIANRDDVAYIERDQIMKASAIQTQRNVPSWGLARVSSRQPGGRDYSYDSTAGQGVTAYIIDTGIDIRHTDFGGRAVWGTNTVDRRNEDCNGHGTHVAGTTGGTSFGVAKRARLVAVKVLDCNGSGSNSAVIAGMQWAMQHASQNDPRRAVANMSLGGGYSQASNQAAAAIVRAGIFLAVAAGNDNRDARSFSPASEPTVCTAAASHVRDGKASFSNWGQLVDVYAPGQDIISARPGGGSRSLSGTSMASPHVCGLGAYLIGLGRGSGGGLCDTIKRMALPVISNPGSGTTNRLINNGVSQ.

Residues 1 to 19 (MVFLGKILPLALAALSVNG) form the signal peptide. A propeptide spanning residues 20 to 117 (AEILSAPGAE…IERDQIMKAS (98 aa)) is cleaved from the precursor. The Inhibitor I9 domain maps to 35–115 (YIVVMKEGTS…AYIERDQIMK (81 aa)). A Peptidase S8 domain is found at 127–398 (SWGLARVSSR…NRLINNGVSQ (272 aa)). Catalysis depends on charge relay system residues Asp-159 and His-190. 2 N-linked (GlcNAc...) asparagine glycosylation sites follow: Asn-220 and Asn-250. Residue Ser-344 is the Charge relay system of the active site.

The protein belongs to the peptidase S8 family.

The protein localises to the secreted. Functionally, secreted subtilisin-like serine protease with keratinolytic activity that contributes to pathogenicity. This Coccidioides posadasii (strain C735) (Valley fever fungus) protein is Subtilisin-like protease CPC735_050320.